Reading from the N-terminus, the 232-residue chain is RNA chaperone ProQ (232 aa).

Positions 105–182 are disordered; the sequence is EAKARVQAQR…REEQHTPVSD (78 aa). Positions 117 to 136 are enriched in basic and acidic residues; the sequence is QQAKKREAAAAAGEKEDAPR. Positions 137–146 are enriched in basic residues; sequence RERKPRPTTP. Basic and acidic residues predominate over residues 147–177; that stretch reads RRKEGAERKPRAQKSVEKAPKTVKAPREEQH.

The protein belongs to the ProQ family.

The protein resides in the cytoplasm. In terms of biological role, RNA chaperone with significant RNA binding, RNA strand exchange and RNA duplexing activities. May regulate ProP activity through an RNA-based, post-transcriptional mechanism. This is RNA chaperone ProQ from Escherichia coli O7:K1 (strain IAI39 / ExPEC).